We begin with the raw amino-acid sequence, 341 residues long: N-acetyl-gamma-glutamyl-phosphate reductase (341 aa).

Cysteine 147 is a catalytic residue.

Belongs to the NAGSA dehydrogenase family. Type 1 subfamily.

It localises to the cytoplasm. It catalyses the reaction N-acetyl-L-glutamate 5-semialdehyde + phosphate + NADP(+) = N-acetyl-L-glutamyl 5-phosphate + NADPH + H(+). It participates in amino-acid biosynthesis; L-arginine biosynthesis; N(2)-acetyl-L-ornithine from L-glutamate: step 3/4. Its function is as follows. Catalyzes the NADPH-dependent reduction of N-acetyl-5-glutamyl phosphate to yield N-acetyl-L-glutamate 5-semialdehyde. The protein is N-acetyl-gamma-glutamyl-phosphate reductase of Dehalococcoides mccartyi (strain ATCC BAA-2266 / KCTC 15142 / 195) (Dehalococcoides ethenogenes (strain 195)).